Consider the following 137-residue polypeptide: BolA-like protein 1 (137 aa).

Residue serine 81 is modified to Phosphoserine. The segment at 115 to 137 (RENPQLDISPPCLGGSKKTRGTS) is disordered.

Belongs to the BolA/IbaG family. As to quaternary structure, interacts with GLRX5.

Its subcellular location is the mitochondrion. Its function is as follows. Acts as a mitochondrial iron-sulfur (Fe-S) cluster assembly factor that facilitates (Fe-S) cluster insertion into a subset of mitochondrial proteins. Probably acts together with the monothiol glutaredoxin GLRX5. May protect cells against oxidative stress. The protein is BolA-like protein 1 (Bola1) of Mus musculus (Mouse).